The sequence spans 88 residues: Small ribosomal subunit protein uS15 (88 aa).

This sequence belongs to the universal ribosomal protein uS15 family. In terms of assembly, part of the 30S ribosomal subunit. Forms a bridge to the 50S subunit in the 70S ribosome, contacting the 23S rRNA.

Functionally, one of the primary rRNA binding proteins, it binds directly to 16S rRNA where it helps nucleate assembly of the platform of the 30S subunit by binding and bridging several RNA helices of the 16S rRNA. Forms an intersubunit bridge (bridge B4) with the 23S rRNA of the 50S subunit in the ribosome. The sequence is that of Small ribosomal subunit protein uS15 from Desulfitobacterium hafniense (strain Y51).